Here is a 734-residue protein sequence, read N- to C-terminus: Photosystem I P700 chlorophyll a apoprotein A2 (734 aa).

The next 8 helical transmembrane spans lie at 46–69, 135–158, 175–199, 273–291, 330–353, 369–395, 417–439, and 517–535; these read IFAS…FHVA, LYSG…LHLQ, LNHH…HVAI, MAHH…GHMY, LHIQ…QHMY, ASLY…IFFV, AIIS…LYVH, and FLVH…LILV. C559 and C568 together coordinate [4Fe-4S] cluster. 2 consecutive transmembrane segments (helical) span residues 575–596 and 643–665; these read AFYL…YWHW and LSVW…MFLI. The chlorophyll a site is built by H654, M662, and Y670. W671 serves as a coordination point for phylloquinone. The helical transmembrane segment at 707–727 threads the bilayer; the sequence is LVGLAHFSVGYVLTYAAFVLA.

This sequence belongs to the PsaA/PsaB family. In terms of assembly, the PsaA/B heterodimer binds the P700 chlorophyll special pair and subsequent electron acceptors. PSI consists of a core antenna complex that captures photons, and an electron transfer chain that converts photonic excitation into a charge separation. The eukaryotic PSI reaction center is composed of at least 11 subunits. It depends on P700 is a chlorophyll a/chlorophyll a' dimer, A0 is one or more chlorophyll a, A1 is one or both phylloquinones and FX is a shared 4Fe-4S iron-sulfur center. as a cofactor.

Its subcellular location is the plastid. It localises to the chloroplast thylakoid membrane. It carries out the reaction reduced [plastocyanin] + hnu + oxidized [2Fe-2S]-[ferredoxin] = oxidized [plastocyanin] + reduced [2Fe-2S]-[ferredoxin]. In terms of biological role, psaA and PsaB bind P700, the primary electron donor of photosystem I (PSI), as well as the electron acceptors A0, A1 and FX. PSI is a plastocyanin/cytochrome c6-ferredoxin oxidoreductase, converting photonic excitation into a charge separation, which transfers an electron from the donor P700 chlorophyll pair to the spectroscopically characterized acceptors A0, A1, FX, FA and FB in turn. Oxidized P700 is reduced on the lumenal side of the thylakoid membrane by plastocyanin or cytochrome c6. The protein is Photosystem I P700 chlorophyll a apoprotein A2 of Pyropia yezoensis (Susabi-nori).